Consider the following 199-residue polypeptide: MYETYHSGWIETITGSMFSGKSEELIRRLRRGIYAKQKVVVFKPAIDDRYHKEKVVSHNGNEIEAINISTAQEILNHKLEEVNVIGIDEVQFFEDDIVNIVEKLAENGHRVIVAGLDMDFRGEPFKPMPKLLAVSEHITKLQAVCSVCGSPSSRTQRLINGEPAKVDDPIILVGANESYEPRCRAHHIVAPSENEKEEM.

ATP contacts are provided by residues 15-22 (GSMFSGKS) and 88-91 (DEVQ). The Proton acceptor role is filled by E89. C145, C148, C183, and H186 together coordinate Zn(2+).

This sequence belongs to the thymidine kinase family. As to quaternary structure, homotetramer.

The protein localises to the cytoplasm. It catalyses the reaction thymidine + ATP = dTMP + ADP + H(+). The polypeptide is Thymidine kinase (Staphylococcus epidermidis (strain ATCC 12228 / FDA PCI 1200)).